The primary structure comprises 20 residues: Calreticulin (20 aa).

The protein belongs to the calreticulin family. In terms of processing, glycosylated.

Its subcellular location is the endoplasmic reticulum lumen. Functionally, molecular calcium-binding chaperone promoting folding, oligomeric assembly and quality control in the ER via the calreticulin/calnexin cycle. This lectin may interact transiently with almost all of the monoglucosylated glycoproteins that are synthesized in the ER. This chain is Calreticulin, found in Spinacia oleracea (Spinach).